We begin with the raw amino-acid sequence, 1183 residues long: DNA-directed RNA polymerase subunit beta (1183 aa).

The segment at Ala-1155–Asp-1183 is disordered.

Belongs to the RNA polymerase beta chain family. In terms of assembly, the RNAP catalytic core consists of 2 alpha, 1 beta, 1 beta' and 1 omega subunit. When a sigma factor is associated with the core the holoenzyme is formed, which can initiate transcription.

The enzyme catalyses RNA(n) + a ribonucleoside 5'-triphosphate = RNA(n+1) + diphosphate. In terms of biological role, DNA-dependent RNA polymerase catalyzes the transcription of DNA into RNA using the four ribonucleoside triphosphates as substrates. In Staphylococcus carnosus (strain TM300), this protein is DNA-directed RNA polymerase subunit beta.